Reading from the N-terminus, the 502-residue chain is Actin-binding protein WASF3 (502 aa).

Residues 57-93 (NEANNFYIRANSLQDRIDRLAVKVTQLDSTVEEVSLQ) are a coiled coil. Tyrosine 151 bears the Phosphotyrosine; by ABL1 mark. Residues 162–206 (KEKMLQDTEDKRKEKRRQKEQKRIDGTTREVKKVRKARNRRQEWN) adopt a coiled-coil conformation. Disordered regions lie at residues 169-210 (TEDK…MMAY) and 223-443 (SVYH…ARSD). Residues 182-192 (QKRIDGTTREV) are compositionally biased toward basic and acidic residues. The span at 223–237 (SVYHGASSEGSLSPD) shows a compositional bias: polar residues. Phosphotyrosine; by ABL1 is present on tyrosine 248. Over residues 302–312 (QQPPPPPPPQA) the composition is skewed to pro residues. A Phosphotyrosine; by ABL1 modification is found at tyrosine 337. Pro residues-rich tracts occupy residues 341–352 (SGPPPPPPPPVI) and 394–410 (APPPPGPPPPPPGPPGP). Low complexity predominate over residues 411–423 (GSSLSSSPMHGPP). In terms of domain architecture, WH2 spans 440–457 (ARSDLLAAIRMGIQLKKV). A Phosphotyrosine; by ABL1 modification is found at tyrosine 486.

It belongs to the SCAR/WAVE family. Binds actin and the Arp2/3 complex. Phosphorylation by ABL1 promotes lamellipodia formation and cell migration. As to expression, expressed in ovary and brain.

Its subcellular location is the cytoplasm. The protein resides in the cytoskeleton. In terms of biological role, downstream effector molecules involved in the transmission of signals from tyrosine kinase receptors and small GTPases to the actin cytoskeleton. Plays a role in the regulation of cell morphology and cytoskeletal organization. Required in the control of cell shape. This Homo sapiens (Human) protein is Actin-binding protein WASF3 (WASF3).